The following is a 199-amino-acid chain: uncharacterized protein (199 aa).

An N-terminal signal peptide occupies residues 1–28; sequence MKKLATVGSLIVTSTLVFSSMPFQNAHA.

The protein resides in the secreted. This is an uncharacterized protein from Staphylococcus aureus (strain NCTC 8325 / PS 47).